The chain runs to 244 residues: S-adenosyl-L-methionine-dependent Diels-Alderase iliD (244 aa).

It belongs to the class I-like SAM-binding methyltransferase superfamily. Erg6/SMT family. The cofactor is S-adenosyl-L-methionine.

It catalyses the reaction 3-[(2E,4E,8S,10E,12Z)-4,8-dimethyltetradeca-2,4,10,12-tetraenoyl]-4-hydroxy-5-(4-hydroxyphenyl)-1,2-dihydropyridin-2-one = ilicicolin H. It participates in mycotoxin biosynthesis. S-adenosyl-l-methionine-dependent Diels-Alderase; part of the gene cluster that mediates the biosynthesis of ilicicolin H, a 4-hydroxy-2-pyridonealkaloid that has potent and broad antifungal activities by inhibiting the mitochondrial respiration chain. IliD catalyzes the Diels-Alder reaction that converts the acyclic 2-pyridone intermediate to 8-epi-ilicicolin H. The biosynthesis of ilicicolin H starts with formation of the tetramic acid by the hybrid PKS-NRPS synthetase iliA with the partnering trans-enoyl reductase iliB since iliA lacks a designated enoylreductase (ER) domain. The cytochrome P450 monooxygenase iliC then catalyzes the ring expansion of the tetramate to the acyclic 2-pyridone. The pericyclase iliD further converts the acyclic 2-pyridone into 8-epi-ilicicolin H. 8-epi-ilicicolin H might then spontaneously convert to ilicicolin H since ilicicolin H is produced in the absence of the epimerase iliE, in contrast to what was observed for the Talaromyces variabilis ilicolin H biosynthetic pathway. This is S-adenosyl-L-methionine-dependent Diels-Alderase iliD from Neonectria sp. (strain DH2).